We begin with the raw amino-acid sequence, 430 residues long: Enolase (430 aa).

A (2R)-2-phosphoglycerate-binding site is contributed by Gln-167. Glu-209 functions as the Proton donor in the catalytic mechanism. Mg(2+) is bound by residues Asp-246, Glu-287, and Asp-314. (2R)-2-phosphoglycerate contacts are provided by Lys-339, Arg-368, Ser-369, and Lys-390. Lys-339 acts as the Proton acceptor in catalysis.

Belongs to the enolase family. Mg(2+) serves as cofactor.

It is found in the cytoplasm. Its subcellular location is the secreted. The protein resides in the cell surface. The enzyme catalyses (2R)-2-phosphoglycerate = phosphoenolpyruvate + H2O. The protein operates within carbohydrate degradation; glycolysis; pyruvate from D-glyceraldehyde 3-phosphate: step 4/5. Catalyzes the reversible conversion of 2-phosphoglycerate (2-PG) into phosphoenolpyruvate (PEP). It is essential for the degradation of carbohydrates via glycolysis. The protein is Enolase of Prochlorococcus marinus (strain MIT 9312).